The primary structure comprises 419 residues: MTFSFDTAAAQGAVIKVIGVGGGGGNAINRMVDEGVTGVEFIAANTDVQALSSTKAETVIQLGPKLTRGLGAGGQPEVGRKAAEESEETLTEAISGADMVFITAGMGGGSGTGAAPVIARIAKDLGALTVGVVTRPFGFEGSKRGQFAVEGINQLREHVDTLLIISNNNLLEIVDKKTPLLEALSEADNVLRQGVQGITDLITNPGLINLDFADVKTVMANKGNALMGIGIGSGEERVVEAARKAIYSPLLETTIDGAEDVIVNVTGGLDLTLIEAEEASQIVNQAAGQGVNIWLGTSIDESMRDEIRVTVVATGVRQDRVEKVVAPQARSATNYRETVKPAHSHGFDRHFDMAETVELPKQNPRRLEPTQASAFGDWDLRRESIVRTTDSVVSPVERFEAPISQDEDELDTPPFFKNR.

GTP-binding positions include G22–N26, G109–G111, E140, R144, and D188. The tract at residues E397–R419 is disordered.

The protein belongs to the FtsZ family. As to quaternary structure, homodimer. Polymerizes to form a dynamic ring structure in a strictly GTP-dependent manner. Interacts directly with several other division proteins. Interacts with CcrZ; the interaction is direct.

The protein resides in the cytoplasm. In terms of biological role, essential cell division protein that forms a contractile ring structure (Z ring) at the future cell division site. The regulation of the ring assembly controls the timing and the location of cell division. One of the functions of the FtsZ ring is to recruit other cell division proteins to the septum to produce a new cell wall between the dividing cells. Binds GTP and shows GTPase activity. This is Cell division protein FtsZ from Streptococcus pneumoniae serotype 2 (strain D39 / NCTC 7466).